The following is a 312-amino-acid chain: MRRQQERKSMPDAVKKVYLIHGWGANRHVFDDLMPRLPATWPVSAVDLPGHGDAPFAQPFDIEAAADAVAAQIDTPADILGWSLGGLVALYLAARHPDKVRSLCLTASFARLTADEDYPEGLAAPALGKMVGAFRTDYAKHIKQFLQLQLLHTPDADGIIGRILPDLARCGTPSALQEALDAAERADARHLLDKIDVPVLLVFGGKDAITPPRMGEYLHRRLKGSRLVVMEKAAHAPFLSHAEAFAALYRDFVEGVLDEPSGRTLAGLPPSCRTCRPTPDTRPQRAQTYPACRGGCGHQPQPAGETLSAGGI.

Positions 17–241 (VYLIHGWGAN…KAAHAPFLSH (225 aa)) constitute an AB hydrolase-1 domain. Substrate-binding positions include tryptophan 23, 83–84 (SL), and 145–149 (FLQLQ). The active-site Nucleophile is the serine 83. Catalysis depends on residues aspartate 207 and histidine 235. Histidine 235 provides a ligand contact to substrate.

Belongs to the AB hydrolase superfamily. Carboxylesterase BioH family. Monomer.

It localises to the cytoplasm. It catalyses the reaction 6-carboxyhexanoyl-[ACP] methyl ester + H2O = 6-carboxyhexanoyl-[ACP] + methanol + H(+). The protein operates within cofactor biosynthesis; biotin biosynthesis. In terms of biological role, the physiological role of BioH is to remove the methyl group introduced by BioC when the pimeloyl moiety is complete. It allows to synthesize pimeloyl-ACP via the fatty acid synthetic pathway through the hydrolysis of the ester bonds of pimeloyl-ACP esters. The chain is Pimeloyl-[acyl-carrier protein] methyl ester esterase from Neisseria meningitidis serogroup A / serotype 4A (strain DSM 15465 / Z2491).